The chain runs to 336 residues: MLVLGIESSCDETGLAIYDYTSKTLVADVLYSQIDLHKKYGGVVPELASREHIAKLNILTKELLSNANINFNDLSCIAYTAMPGLIGALMVGATFAKTLGLIHNIDTVAVHHLEGHLLSPLLDQSSDIKYPFVALLVSGGHTQLFEVREFGEYSLLGESIDDAAGEAFDKTAKLLGMSYPGGVEVANLAEKATDKKKYDLPRPMKNKPNLDFSFSGLKTAVLNTWYSETDQSYENKANLCYAFQEAAIDVLVTKCEKALQKTGNKRLVISGGVSANKLLRSKLDILSKNKGYEIFFPPMKYCTDNGAMIALAGAYRYANSFRDSNLEINVKARAQI.

Fe cation contacts are provided by H112 and H116. Substrate is bound by residues 136-140 (LVSGG), D169, G182, and N276. Fe cation is bound at residue D304.

Belongs to the KAE1 / TsaD family. Fe(2+) is required as a cofactor.

Its subcellular location is the cytoplasm. The catalysed reaction is L-threonylcarbamoyladenylate + adenosine(37) in tRNA = N(6)-L-threonylcarbamoyladenosine(37) in tRNA + AMP + H(+). Functionally, required for the formation of a threonylcarbamoyl group on adenosine at position 37 (t(6)A37) in tRNAs that read codons beginning with adenine. Is involved in the transfer of the threonylcarbamoyl moiety of threonylcarbamoyl-AMP (TC-AMP) to the N6 group of A37, together with TsaE and TsaB. TsaD likely plays a direct catalytic role in this reaction. This Francisella philomiragia subsp. philomiragia (strain ATCC 25017 / CCUG 19701 / FSC 153 / O#319-036) protein is tRNA N6-adenosine threonylcarbamoyltransferase.